A 62-amino-acid chain; its full sequence is Large ribosomal subunit protein uL30 (62 aa).

It belongs to the universal ribosomal protein uL30 family. In terms of assembly, part of the 50S ribosomal subunit.

This Gluconobacter oxydans (strain 621H) (Gluconobacter suboxydans) protein is Large ribosomal subunit protein uL30.